Reading from the N-terminus, the 318-residue chain is Protein OPG137 (318 aa).

Positions 145 to 172 (VYDKDKRIQMLEDEVVNLRNQRSNTKSS) form a coiled coil.

This sequence belongs to the orthopoxvirus OPG137 family. In terms of assembly, homomultimer. Interacts with OPG160. In terms of processing, phosphorylated by a OPG054-independent mechanism.

The protein localises to the host cytoplasm. Required for viral crescent formation early during virus morphogenesis. The sequence is that of Protein OPG137 (OPG137) from Vaccinia virus (strain Western Reserve) (VACV).